The chain runs to 125 residues: Probable 4-amino-4-deoxy-L-arabinose-phosphoundecaprenol flippase subunit ArnF (125 aa).

Residues 1–2 (MG) lie on the Cytoplasmic side of the membrane. The helical transmembrane segment at 3–23 (VMWGLISVAIASLAQLSLGFA) threads the bilayer. The Periplasmic segment spans residues 24 to 33 (MMRLPSIAHP). Residues 34–54 (LAFISGLGALNAATLALFAGL) traverse the membrane as a helical segment. Residues 55–76 (AGYLVSVFCWHKTLHTLALSKA) lie on the Cytoplasmic side of the membrane. The chain crosses the membrane as a helical span at residues 77-97 (YALLSLSYVLVWVASMLLPGL). At 98 to 100 (QGA) the chain is on the periplasmic side. A helical membrane pass occupies residues 101 to 121 (FSLKAMLGVLCIMAGVMLIFL). The Cytoplasmic segment spans residues 122–125 (PARS).

The protein belongs to the ArnF family. Heterodimer of ArnE and ArnF.

The protein resides in the cell inner membrane. Its pathway is bacterial outer membrane biogenesis; lipopolysaccharide biosynthesis. Functionally, translocates 4-amino-4-deoxy-L-arabinose-phosphoundecaprenol (alpha-L-Ara4N-phosphoundecaprenol) from the cytoplasmic to the periplasmic side of the inner membrane. The protein is Probable 4-amino-4-deoxy-L-arabinose-phosphoundecaprenol flippase subunit ArnF of Salmonella agona (strain SL483).